Consider the following 213-residue polypeptide: uncharacterized protein (213 aa).

This is an uncharacterized protein from Acidianus two-tailed virus (ATV).